Reading from the N-terminus, the 138-residue chain is Altered inheritance of mitochondria protein 11 (138 aa).

2 helical membrane-spanning segments follow: residues 17–34 (ARFY…RLIS) and 67–89 (LTYA…CWAL).

The protein belongs to the AIM11 family.

The protein resides in the membrane. This Saccharomyces cerevisiae (strain JAY291) (Baker's yeast) protein is Altered inheritance of mitochondria protein 11 (AIM11).